A 312-amino-acid chain; its full sequence is NADH-ubiquinone oxidoreductase chain 1 (312 aa).

Helical transmembrane passes span 3–23, 37–57, 69–89, 104–124, 141–161, 173–193, 233–253, and 279–299; these read FMEL…LTVA, PNAV…KLLL, FMLI…WAMI, FMLA…AGWA, LISY…LTGT, SMWL…GCVA, MLFY…GLIL, and LIAM…LFMP.

The protein belongs to the complex I subunit 1 family.

It localises to the mitochondrion inner membrane. The enzyme catalyses a ubiquinone + NADH + 5 H(+)(in) = a ubiquinol + NAD(+) + 4 H(+)(out). Its function is as follows. Core subunit of the mitochondrial membrane respiratory chain NADH dehydrogenase (Complex I) that is believed to belong to the minimal assembly required for catalysis. Complex I functions in the transfer of electrons from NADH to the respiratory chain. The immediate electron acceptor for the enzyme is believed to be ubiquinone. The sequence is that of NADH-ubiquinone oxidoreductase chain 1 (ND1) from Debaryomyces hansenii (strain ATCC 36239 / CBS 767 / BCRC 21394 / JCM 1990 / NBRC 0083 / IGC 2968) (Yeast).